Consider the following 82-residue polypeptide: Cytochrome b559 subunit alpha (82 aa).

The helical transmembrane segment at 22 to 36 (VIHAITLPSIFLAGF) threads the bilayer. His24 is a binding site for heme.

This sequence belongs to the PsbE/PsbF family. Heterodimer of an alpha subunit and a beta subunit. PSII is composed of 1 copy each of membrane proteins PsbA, PsbB, PsbC, PsbD, PsbE, PsbF, PsbH, PsbI, PsbJ, PsbK, PsbL, PsbM, PsbT, PsbX, PsbY, PsbZ, Psb30/Ycf12, peripheral proteins PsbO, CyanoQ (PsbQ), PsbU, PsbV and a large number of cofactors. It forms dimeric complexes. Heme b is required as a cofactor.

It localises to the cellular thylakoid membrane. In terms of biological role, this b-type cytochrome is tightly associated with the reaction center of photosystem II (PSII). PSII is a light-driven water:plastoquinone oxidoreductase that uses light energy to abstract electrons from H(2)O, generating O(2) and a proton gradient subsequently used for ATP formation. It consists of a core antenna complex that captures photons, and an electron transfer chain that converts photonic excitation into a charge separation. This chain is Cytochrome b559 subunit alpha, found in Synechococcus sp. (strain WH7803).